Here is an 860-residue protein sequence, read N- to C-terminus: Leucine--tRNA ligase (860 aa).

The short motif at 42-52 (PYPSGRLHMGH) is the 'HIGH' region element. The 'KMSKS' region signature appears at 619 to 623 (KMSKS). Position 622 (Lys622) interacts with ATP.

Belongs to the class-I aminoacyl-tRNA synthetase family.

It localises to the cytoplasm. It carries out the reaction tRNA(Leu) + L-leucine + ATP = L-leucyl-tRNA(Leu) + AMP + diphosphate. The chain is Leucine--tRNA ligase from Serratia proteamaculans (strain 568).